The following is a 187-amino-acid chain: Adenine phosphoribosyltransferase (187 aa).

The protein belongs to the purine/pyrimidine phosphoribosyltransferase family. In terms of assembly, homodimer.

Its subcellular location is the cytoplasm. It carries out the reaction AMP + diphosphate = 5-phospho-alpha-D-ribose 1-diphosphate + adenine. Its pathway is purine metabolism; AMP biosynthesis via salvage pathway; AMP from adenine: step 1/1. Catalyzes a salvage reaction resulting in the formation of AMP, that is energically less costly than de novo synthesis. This Yersinia pseudotuberculosis serotype I (strain IP32953) protein is Adenine phosphoribosyltransferase.